Reading from the N-terminus, the 231-residue chain is MGQKSNPIGMRLQINRTWDSRWYADGADYGRLLLEDLKIRKHIMKAIPQAAISKVVIERPAKLCRISVYAARPGVIIGKKGADIEKLRRALGKMTSSDVSLNIVEIRKPEIDSKLVAQGVADQLERRIAFRRAMKRAVQSALRLGAEGIRITCAGRLGGAEIARTEWYREGRVPLHTLRANVDYAEAEAHTAYGVCGIKVWIFKGEILGHDPLAQDRLMMEAQTSGVRPAR.

Residues 39–107 (IRKHIMKAIP…DVSLNIVEIR (69 aa)) form the KH type-2 domain.

This sequence belongs to the universal ribosomal protein uS3 family. As to quaternary structure, part of the 30S ribosomal subunit. Forms a tight complex with proteins S10 and S14.

Its function is as follows. Binds the lower part of the 30S subunit head. Binds mRNA in the 70S ribosome, positioning it for translation. This chain is Small ribosomal subunit protein uS3, found in Rhizorhabdus wittichii (strain DSM 6014 / CCUG 31198 / JCM 15750 / NBRC 105917 / EY 4224 / RW1) (Sphingomonas wittichii).